Reading from the N-terminus, the 159-residue chain is uncharacterized protein (159 aa).

The chain crosses the membrane as a helical span at residues 4–24 (QIALILSLIILIFFIYKFAMF).

Its subcellular location is the membrane. This is an uncharacterized protein from Acheta domesticus (House cricket).